A 610-amino-acid chain; its full sequence is Protein arginine N-methyltransferase 5 (610 aa).

The SAM-dependent MTase PRMT-type domain occupies 284–587 (LEIPLQPLCD…VDATKVWYEW (304 aa)). Tyr-300 provides a ligand contact to S-adenosyl-L-methionine. Residue Phe-303 coordinates a protein. Residues 309 to 310 (KY), Glu-368, and 396 to 397 (DM) each bind S-adenosyl-L-methionine. Residues Glu-412 and Glu-421 each coordinate a protein. Residues Glu-412 and Glu-421 each act as proton donor/acceptor in the active site. The interval 470–610 (AFDYGYVSLL…TRGTGYNMRL (141 aa)) is interaction with vls.

This sequence belongs to the class I-like SAM-binding methyltransferase superfamily. Protein arginine N-methyltransferase family. Interacts with vls. In terms of tissue distribution, expressed only in ovaries.

The protein localises to the cytoplasm. Functionally, arginine methyltransferase that can both catalyze the formation of omega-N monomethylarginine (MMA) and symmetrical dimethylarginine (sDMA). Specifically mediates the symmetrical dimethylation of arginine residues in the small nuclear ribonucleoproteins SmD1 and SmD3. Required for arginine symmetrical dimethylation of piwi family proteins, piwi, aub and AGO3, during germline development. Required during oogenesis for pole cell formation in the pathway controlled by oskar (osk) and for abdominal segments during early embryogenesis. Involved in nanos (nos) and germ cell mRNAs localization. The protein is Protein arginine N-methyltransferase 5 of Drosophila melanogaster (Fruit fly).